A 227-amino-acid polypeptide reads, in one-letter code: 7-cyano-7-deazaguanine synthase (227 aa).

8 to 18 (FSGGQDSTTCL) lines the ATP pocket. Zn(2+)-binding residues include C187, C196, C199, and C202.

It belongs to the QueC family. Requires Zn(2+) as cofactor.

It catalyses the reaction 7-carboxy-7-deazaguanine + NH4(+) + ATP = 7-cyano-7-deazaguanine + ADP + phosphate + H2O + H(+). Its pathway is purine metabolism; 7-cyano-7-deazaguanine biosynthesis. Catalyzes the ATP-dependent conversion of 7-carboxy-7-deazaguanine (CDG) to 7-cyano-7-deazaguanine (preQ(0)). The sequence is that of 7-cyano-7-deazaguanine synthase from Aliivibrio salmonicida (strain LFI1238) (Vibrio salmonicida (strain LFI1238)).